Here is a 104-residue protein sequence, read N- to C-terminus: Large ribosomal subunit protein bL21 (104 aa).

This sequence belongs to the bacterial ribosomal protein bL21 family. As to quaternary structure, part of the 50S ribosomal subunit. Contacts protein L20.

Its function is as follows. This protein binds to 23S rRNA in the presence of protein L20. The chain is Large ribosomal subunit protein bL21 from Helicobacter pylori (strain P12).